A 383-amino-acid chain; its full sequence is Gap junction alpha-1 protein (383 aa).

The Cytoplasmic segment spans residues 2 to 23 (GDWSALGKLLDKVQAYSTAGGK). At Ser-5 the chain carries Phosphoserine. Residues 24–44 (VWLSVLFIFRILLLGTAVESA) form a helical membrane-spanning segment. Residues 45–76 (WGDEQSAFRCNTQQPGCENVCYDKSFPISHVR) are Extracellular-facing. Cystine bridges form between Cys-54–Cys-193 and Cys-188–Cys-199. A helical membrane pass occupies residues 77–97 (FWVLQIIFVSVPTLLYLAHVF). Residues 98-156 (YVMRKEEKLNKKEEELKVVAQTDGANVDMHLKQIEIKKFKYGIEEHGKVKMRGGLLRTY) are Cytoplasmic-facing. Lys-145 participates in a covalent cross-link: Glycyl lysine isopeptide (Lys-Gly) (interchain with G-Cter in SUMO). A helical membrane pass occupies residues 157–177 (IISILFKSVFEVAFLLIQWYI). The Extracellular portion of the chain corresponds to 178-208 (YGFSLSAVYTCKRDPCPHQVDCFLSRPTEKT). The chain crosses the membrane as a helical span at residues 209 to 229 (IFIIFMLVVSLVSLALNIIEL). Over 230 to 383 (FYVFFKGVKD…SRPRPDDLEI (154 aa)) the chain is Cytoplasmic. A Glycyl lysine isopeptide (Lys-Gly) (interchain with G-Cter in SUMO) cross-link involves residue Lys-238. An interaction with NOV region spans residues 245-383 (SDPYHTTTGP…SRPRPDDLEI (139 aa)). Position 248 is a phosphotyrosine (Tyr-248). Phosphoserine occurs at positions 256, 258, and 263. The interval 265–383 (KYAYFNGCSS…SRPRPDDLEI (119 aa)) is interaction with UBQLN4. At Cys-272 the chain carries S-nitrosocysteine. Thr-276 bears the Phosphothreonine mark. 2 positions are modified to phosphoserine: Ser-307 and Ser-315. Residues 318–333 (QNRMGQAGSTISNSHA) are compositionally biased toward polar residues. Positions 318–383 (QNRMGQAGST…SRPRPDDLEI (66 aa)) are disordered. Ser-326 carries the phosphoserine; by CK1 modification. Phosphothreonine is present on Thr-327. Residues Ser-329 and Ser-331 each carry the phosphoserine; by CK1 modification. Residues 339-352 (PDDHQNSKKLDAGH) show a composition bias toward basic and acidic residues. 2 positions are modified to phosphoserine: Ser-345 and Ser-366. Low complexity predominate over residues 363 to 375 (RPSSRASSRASSR). Residue Ser-369 is modified to Phosphoserine; by PKC/PRKCG and PKC/PRKCD. Ser-370 and Ser-374 each carry phosphoserine.

It belongs to the connexin family. Alpha-type (group II) subfamily. As to quaternary structure, a connexon is composed of a hexamer of connexins. Interacts with SGSM3. Interacts with RIC1/CIP150. Interacts with CNST and CSNK1D. Interacts (via C-terminus) with TJP1. Interacts (via C-terminus) with SRC (via SH3 domain). Interacts (not ubiquitinated) with UBQLN4 (via UBA domain). Interacts with NOV. Interacts with TMEM65. Interacts with ANK3/ANKG and PKP2. In terms of processing, phosphorylation at Ser-326, Ser-329 and Ser-331 by CK1 modulates gap junction assembly. Phosphorylated at Ser-369 by PRKCG; phosphorylation induces disassembly of gap junction plaques and inhibition of gap junction activity. Phosphorylation at Ser-369 by PRKCD triggers its internalization into small vesicles leading to proteasome-mediated degradation. Post-translationally, sumoylated with SUMO1, SUMO2 and SUMO3, which may regulate the level of functional Cx43 gap junctions at the plasma membrane. May be desumoylated by SENP1 or SENP2. Acetylated in the developing cortex; leading to delocalization from the cell membrane.

It localises to the cell membrane. It is found in the cell junction. Its subcellular location is the gap junction. The protein localises to the endoplasmic reticulum. In terms of biological role, gap junction protein that acts as a regulator of bladder capacity. A gap junction consists of a cluster of closely packed pairs of transmembrane channels, the connexons, through which materials of low MW diffuse from one cell to a neighboring cell. May play a critical role in the physiology of hearing by participating in the recycling of potassium to the cochlear endolymph. Negative regulator of bladder functional capacity: acts by enhancing intercellular electrical and chemical transmission, thus sensitizing bladder muscles to cholinergic neural stimuli and causing them to contract. May play a role in cell growth inhibition through the regulation of NOV expression and localization. Plays an essential role in gap junction communication in the ventricles. The chain is Gap junction alpha-1 protein (GJA1) from Bos taurus (Bovine).